We begin with the raw amino-acid sequence, 653 residues long: MDSDMEISLDRLPIKRLESIEENGAERFPSDVDYDDKRVSLIRRIDFAWALEEEDELKKKKQKKSSKDSVEQWKWKGMVENLQLAHQELTVIIDLIDTVQANDAVTVAGMTRPKPMPNEILSDLAVSTATKLQGYRNLGNYFKQSAKALEQKINREARFYGALIRLQRNWKVKRQRMLASNASNEGFTIDLSDSSLYDPTSGFRPSTLSTIRVDHDSAGMLAINVPQDSWYSLRFGYVGLNPIGNSNESDEHIDSTTGHDIPGTSEKLSASDDKYVKETHSLLREVHKSIFAEQLFDMLNREAFNEGVGFNISGLRENFMEMSIGQGASLFVSLHPSGKNPSIKKSESATLLIESSGRVEPAEGGDYRLKKLGFPNRTSYEIYLQQIFHEHAFGKAKDQLKSKSIRASNQTEKDSNSGLLDHFCLSLTHRIFSNRVLVHLESVVCKVPYLHLISHPTWNSRTSSWTVFMTVPPSIIPQGRSETQSPDGKRNLKTQFRTKVVVKDDCISVEAECTPNVVGLLKSSSCNLFSINKYECDVADLPVMILQQVASQIVCWLLEEARTVGTKASREFLSLSLEIVEGERVSLVAHVNPEDAKGCISWWLVMENGCTEEREGVSESRKLLGHLSLDVLYSVLMDLINLCGTGRNALERL.

A disordered region spans residues 246 to 271; the sequence is SNESDEHIDSTTGHDIPGTSEKLSAS.

Belongs to the Mediator complex subunit 17 family. Component of the Mediator complex.

It localises to the nucleus. Functionally, component of the Mediator complex, a coactivator involved in the regulated transcription of nearly all RNA polymerase II-dependent genes. Mediator functions as a bridge to convey information from gene-specific regulatory proteins to the basal RNA polymerase II transcription machinery. The Mediator complex, having a compact conformation in its free form, is recruited to promoters by direct interactions with regulatory proteins and serves for the assembly of a functional preinitiation complex with RNA polymerase II and the general transcription factors. This chain is Mediator of RNA polymerase II transcription subunit 17 (MED17), found in Arabidopsis thaliana (Mouse-ear cress).